The chain runs to 271 residues: Ribosomal RNA small subunit methyltransferase A (271 aa).

Residues His11, Leu13, Gly38, Glu58, Asp86, and Asn101 each contribute to the S-adenosyl-L-methionine site.

It belongs to the class I-like SAM-binding methyltransferase superfamily. rRNA adenine N(6)-methyltransferase family. RsmA subfamily.

The protein resides in the cytoplasm. The enzyme catalyses adenosine(1518)/adenosine(1519) in 16S rRNA + 4 S-adenosyl-L-methionine = N(6)-dimethyladenosine(1518)/N(6)-dimethyladenosine(1519) in 16S rRNA + 4 S-adenosyl-L-homocysteine + 4 H(+). Functionally, specifically dimethylates two adjacent adenosines (A1518 and A1519) in the loop of a conserved hairpin near the 3'-end of 16S rRNA in the 30S particle. May play a critical role in biogenesis of 30S subunits. This is Ribosomal RNA small subunit methyltransferase A from Helicobacter pylori (strain G27).